The sequence spans 361 residues: Dual specificity mitogen-activated protein kinase kinase 6 (361 aa).

Basic and acidic residues-rich tracts occupy residues 1–11 (MEGGSDKESKV) and 37–48 (PKELKLPKEVFE). A disordered region spans residues 1–61 (MEGGSDKESK…PAPTPPRDLD (61 aa)). The interval 30-46 (VRGKKKLPKELKLPKEV) is d domain. Positions 80 to 341 (LEQIGELGRG…YTELMQHPFF (262 aa)) constitute a Protein kinase domain. Residues 86–94 (LGRGAYGVV) and Lys-109 each bind ATP. Asp-206 (proton acceptor) is an active-site residue. The residue at position 234 (Ser-234) is a Phosphoserine; by MAPK3. Position 238 is a phosphothreonine; by MAPK3 (Thr-238). The DVD domain stretch occupies residues 338 to 361 (HPFFTLHDSKDTDVASFVKTILGD).

It belongs to the protein kinase superfamily. STE Ser/Thr protein kinase family. MAP kinase kinase subfamily. As to quaternary structure, dimer. Interacts (via its D domain) with its MAP kinase substrates. Interacts (via its DVD domain) with MAP3Ks activators. Weakly autophosphorylated. Phosphorylated at Ser-234 and Thr-238 by the majority of M3Ks.

It is found in the nucleus. The protein resides in the cytoplasm. The protein localises to the cytoskeleton. The catalysed reaction is L-seryl-[protein] + ATP = O-phospho-L-seryl-[protein] + ADP + H(+). It catalyses the reaction L-threonyl-[protein] + ATP = O-phospho-L-threonyl-[protein] + ADP + H(+). The enzyme catalyses L-tyrosyl-[protein] + ATP = O-phospho-L-tyrosyl-[protein] + ADP + H(+). With respect to regulation, activated by dual phosphorylation on Ser-234 and Thr-238 in response to a variety of cellular stresses, including UV radiation, osmotic shock, hypoxia, inflammatory cytokines, interferon gamma (IFNG), and less often by growth factors. MAP2K6/MKK6 is activated by the majority of M3Ks. In terms of biological role, dual specificity protein kinase which acts as an essential component of the MAP kinase signal transduction pathway. Catalyzes the concomitant phosphorylation of a threonine and a tyrosine residue in the MAP kinases p38 and plays an important role in the regulation of cellular responses to cytokines and all kinds of stresses. The p38 MAP kinase signal transduction pathway leads to direct activation of transcription factors. Phosphorylation by MAP2K6 asymmetrically activates p38 on one side of the blastodisc, an event which is necessary for blastomere cleavage. This Danio rerio (Zebrafish) protein is Dual specificity mitogen-activated protein kinase kinase 6.